The sequence spans 499 residues: Glycerol kinase (499 aa).

T13 contributes to the ADP binding site. T13, T14, and S15 together coordinate ATP. Residue T13 participates in sn-glycerol 3-phosphate binding. R17 is an ADP binding site. Residues R83, E84, Y135, and D245 each coordinate sn-glycerol 3-phosphate. Glycerol-binding residues include R83, E84, Y135, D245, and Q246. The ADP site is built by T267 and G310. ATP contacts are provided by T267, G310, Q314, and G411. ADP contacts are provided by G411 and N415.

This sequence belongs to the FGGY kinase family.

The enzyme catalyses glycerol + ATP = sn-glycerol 3-phosphate + ADP + H(+). Its pathway is polyol metabolism; glycerol degradation via glycerol kinase pathway; sn-glycerol 3-phosphate from glycerol: step 1/1. Its activity is regulated as follows. Inhibited by fructose 1,6-bisphosphate (FBP). Key enzyme in the regulation of glycerol uptake and metabolism. Catalyzes the phosphorylation of glycerol to yield sn-glycerol 3-phosphate. The chain is Glycerol kinase from Xanthomonas axonopodis pv. citri (strain 306).